Reading from the N-terminus, the 1082-residue chain is AP-3 complex subunit beta-2 (1082 aa).

A disordered region spans residues 1-30; that stretch reads MSAAPAYSEDKGGSAGPGEPEYGHDPASGG. Phosphoserine occurs at positions 272 and 282. The span at 666-677 shows a compositional bias: basic and acidic residues; it reads NREKRKEKEKPF. The segment at 666 to 801 is disordered; sequence NREKRKEKEK…KTPPGSKSAP (136 aa). A compositionally biased stretch (acidic residues) spans 691 to 700; it reads ADSEPESESE. Low complexity predominate over residues 704 to 715; it reads KSSSGSGSGESS. 2 stretches are compositionally biased toward acidic residues: residues 716-726 and 775-784; these read SESDNEEEDEE and VTSESEEEQV.

It belongs to the adaptor complexes large subunit family. In terms of assembly, adaptor protein complex 3 (AP-3) is a heterotetramer composed of two large adaptins (delta-type subunit AP3D1 and beta-type subunit AP3B1 or AP3B2), a medium adaptin (mu-type subunit AP3M1 or AP3M2) and a small adaptin (sigma-type subunit APS1 or AP3S2). AP-3 associates with the BLOC-1 complex.

It localises to the cytoplasmic vesicle. The protein localises to the clathrin-coated vesicle membrane. It is found in the golgi apparatus. Its function is as follows. Subunit of non-clathrin- and clathrin-associated adaptor protein complex 3 (AP-3) that plays a role in protein sorting in the late-Golgi/trans-Golgi network (TGN) and/or endosomes. The AP complexes mediate both the recruitment of clathrin to membranes and the recognition of sorting signals within the cytosolic tails of transmembrane cargo molecules. AP-3 appears to be involved in the sorting of a subset of transmembrane proteins targeted to lysosomes and lysosome-related organelles. In concert with the BLOC-1 complex, AP-3 is required to target cargos into vesicles assembled at cell bodies for delivery into neurites and nerve terminals. The polypeptide is AP-3 complex subunit beta-2 (Ap3b2) (Mus musculus (Mouse)).